The chain runs to 78 residues: UPF0335 protein RrIowa_0193 (78 aa).

The protein belongs to the UPF0335 family.

The sequence is that of UPF0335 protein RrIowa_0193 from Rickettsia rickettsii (strain Iowa).